The chain runs to 195 residues: Large ribosomal subunit protein eL18 (195 aa).

A Glycyl lysine isopeptide (Lys-Gly) (interchain with G-Cter in SUMO2) cross-link involves residue lysine 126. Phosphoserine is present on serine 137. A disordered region spans residues 158–195 (HFGKAPGTPHSHTKPYVRSKGRKFERARGRRASRGYKN). Threonine 165 carries the post-translational modification Phosphothreonine. Basic residues-rich tracts occupy residues 168 to 178 (SHTKPYVRSKG) and 185 to 195 (RGRRASRGYKN). Lysine 171 participates in a covalent cross-link: Glycyl lysine isopeptide (Lys-Gly) (interchain with G-Cter in SUMO2).

This sequence belongs to the eukaryotic ribosomal protein eL18 family. As to quaternary structure, component of the large ribosomal subunit.

It is found in the cytoplasm. Its subcellular location is the cytosol. The protein resides in the rough endoplasmic reticulum. In terms of biological role, component of the large ribosomal subunit. This is Large ribosomal subunit protein eL18 (RPL18) from Sus scrofa (Pig).